Here is a 91-residue protein sequence, read N- to C-terminus: MGRSLKKGPFISDSLLRKIEKQNSNDDKAVIKTWSRASTILPLMIGHTIAVHNGKSHIPVFITEQMVGHKLGEFAPTRTYRGHIRDKKGAR.

This sequence belongs to the universal ribosomal protein uS19 family.

Protein S19 forms a complex with S13 that binds strongly to the 16S ribosomal RNA. This chain is Small ribosomal subunit protein uS19, found in Prochlorococcus marinus (strain NATL1A).